The sequence spans 104 residues: Protein E7 (104 aa).

The tract at residues 1-47 is E7 terminal domain; that stretch reads MHGNIINIEDVILDLVPQPEIDLRCYEQLDYEQFDSSDEDETDNMRD. An LXCXE motif; interaction with host RB1 and TMEM173/STING motif is present at residues 23 to 27; it reads LRCYE. A zinc finger lies at 65 to 101; it reads CCMCNSIVQLAVQSSRQNVRVLEQMLMEDVSLVCHQC. A Nuclear export signal motif is present at residues 83–91; the sequence is VRVLEQMLM.

It belongs to the papillomaviridae E7 protein family. In terms of assembly, homodimer. Homooligomer. Interacts with host RB1; this interaction induces dissociation of RB1-E2F1 complex thereby disrupting RB1 activity. Interacts with host EP300; this interaction represses EP300 transcriptional activity. Interacts with protein E2; this interaction inhibits E7 oncogenic activity. Interacts with host TMEM173/STING; this interaction impairs the ability of TMEM173/STING to sense cytosolic DNA and promote the production of type I interferon (IFN-alpha and IFN-beta). In terms of processing, highly phosphorylated.

The protein resides in the host cytoplasm. It localises to the host nucleus. Functionally, plays a role in viral genome replication by driving entry of quiescent cells into the cell cycle. Stimulation of progression from G1 to S phase allows the virus to efficiently use the cellular DNA replicating machinery to achieve viral genome replication. E7 protein has both transforming and trans-activating activities. Induces the disassembly of the E2F1 transcription factor from RB1, with subsequent transcriptional activation of E2F1-regulated S-phase genes. Interferes with host histone deacetylation mediated by HDAC1 and HDAC2, leading to transcription activation. Also plays a role in the inhibition of both antiviral and antiproliferative functions of host interferon alpha. Interaction with host TMEM173/STING impairs the ability of TMEM173/STING to sense cytosolic DNA and promote the production of type I interferon (IFN-alpha and IFN-beta). The polypeptide is Protein E7 (Human papillomavirus type 26).